We begin with the raw amino-acid sequence, 532 residues long: MVIINNLTFNQDYSCVSVSTTKYHKIFNCDPFGEFYSSYQGSSGTKGDKPNDNDKEIIIDKGNGNEYNKIGEDSPTSYLKMLFSTSLTIIIPQNESVGNRLLKIYNLKQNMKICELTFPSHIIDVKLNRKRLCVILESGQIYIYDLSCVRLIKVLEISSFSSKDSEEETHQKLFVGDLGAEDKSLLVLPISNITDQTDLFNTENGVNVTRASDSNILTSLKPLIEFTENKIDKDIITLEDLQKDSNGWVLIYDTIKLKPRLIYKAHDSSLAKITISNDNKKIATASSKGTIIRVCHLESSDDEDVSKPFNISQIINLRRGHNIAKVNCLSFSLDNSILGCGSESNTIHFFRLSKQPHESFEYEEDPANESDPDDEDRSSEDLNQNLANLLISKTPDASAPDQKDSAKSSYFGVLKKKVEGSSRFMNNPYTQTIVRNLPYKNYFENLIWEPPRRAFAYVKLPEYTPPQLFNLHQSKNKVAIGFANTNNNGHLIMLASYQTGQFYHYQLPKPSDQPEPSDSRHECNLIAQYSLL.

WD repeat units follow at residues 265 to 310 and 321 to 360; these read AHDS…KPFN and HNIAKVNCLSFSLDNSILGCGSESNTIHFFRLSKQPHESF. A L/FRRG motif motif is present at residues 317 to 321; sequence LRRGH. Residues 360-380 form a disordered region; it reads FEYEEDPANESDPDDEDRSSE. Residues 361–378 are compositionally biased toward acidic residues; that stretch reads EYEEDPANESDPDDEDRS.

It belongs to the WD repeat PROPPIN family.

It is found in the cytoplasm. The protein resides in the membrane. It localises to the vacuole membrane. In terms of biological role, required for cytoplasm to vacuole transport (Cvt) vesicles formation and mitophagy. Involved in binding of phosphatidylethanolamine to ATG8 and in recruitment of ATG8 and ATG5 to the pre-autophagosomal structure. Protects ATG8 from ARG4-mediated cleavage. This Debaryomyces hansenii (strain ATCC 36239 / CBS 767 / BCRC 21394 / JCM 1990 / NBRC 0083 / IGC 2968) (Yeast) protein is Autophagy-related protein 21 (ATG21).